The chain runs to 350 residues: Heat-inducible transcription repressor HrcA (350 aa).

This sequence belongs to the HrcA family.

Functionally, negative regulator of class I heat shock genes (grpE-dnaK-dnaJ and groELS operons). Prevents heat-shock induction of these operons. This is Heat-inducible transcription repressor HrcA from Xanthomonas euvesicatoria pv. vesicatoria (strain 85-10) (Xanthomonas campestris pv. vesicatoria).